A 185-amino-acid chain; its full sequence is Endoribonuclease YbeY (185 aa).

The Zn(2+) site is built by histidine 142, histidine 146, and histidine 152.

This sequence belongs to the endoribonuclease YbeY family. Requires Zn(2+) as cofactor.

It is found in the cytoplasm. Functionally, single strand-specific metallo-endoribonuclease involved in late-stage 70S ribosome quality control and in maturation of the 3' terminus of the 16S rRNA. The polypeptide is Endoribonuclease YbeY (Parvibaculum lavamentivorans (strain DS-1 / DSM 13023 / NCIMB 13966)).